The chain runs to 275 residues: Large ribosomal subunit protein uL2 (275 aa).

Disordered stretches follow at residues 1 to 24 (MGIRSFRPYTPGTRQATVSDFSEI) and 208 to 275 (AGRT…RRRR). Over residues 12 to 22 (GTRQATVSDFS) the composition is skewed to polar residues. Basic residues-rich tracts occupy residues 208 to 219 (AGRTRHLGRRPQ) and 255 to 275 (LGKKTRKKKKQSSSLIVRRRR).

Belongs to the universal ribosomal protein uL2 family. Part of the 50S ribosomal subunit. Forms a bridge to the 30S subunit in the 70S ribosome.

Functionally, one of the primary rRNA binding proteins. Required for association of the 30S and 50S subunits to form the 70S ribosome, for tRNA binding and peptide bond formation. It has been suggested to have peptidyltransferase activity; this is somewhat controversial. Makes several contacts with the 16S rRNA in the 70S ribosome. The sequence is that of Large ribosomal subunit protein uL2 from Picosynechococcus sp. (strain ATCC 27264 / PCC 7002 / PR-6) (Agmenellum quadruplicatum).